The sequence spans 447 residues: N-succinylarginine dihydrolase (447 aa).

Substrate contacts are provided by residues 19 to 28, Asn-110, and 137 to 138; these read AGLSFGNEAS and HR. Glu-174 is a catalytic residue. Arg-212 provides a ligand contact to substrate. His-248 is an active-site residue. Positions 250 and 359 each coordinate substrate. Catalysis depends on Cys-365, which acts as the Nucleophile.

It belongs to the succinylarginine dihydrolase family. Homodimer.

It catalyses the reaction N(2)-succinyl-L-arginine + 2 H2O + 2 H(+) = N(2)-succinyl-L-ornithine + 2 NH4(+) + CO2. It functions in the pathway amino-acid degradation; L-arginine degradation via AST pathway; L-glutamate and succinate from L-arginine: step 2/5. Functionally, catalyzes the hydrolysis of N(2)-succinylarginine into N(2)-succinylornithine, ammonia and CO(2). This is N-succinylarginine dihydrolase from Shigella boydii serotype 4 (strain Sb227).